The primary structure comprises 631 residues: Interferon-induced GTP-binding protein Mx1 (631 aa).

The Dynamin-type G domain maps to 33–306 (DLALPAIAVI…LTSHICKSLP (274 aa)). Positions 43 to 50 (GDQSSGKS) are G1 motif. 43–50 (GDQSSGKS) contacts GTP. The interval 68-70 (VTR) is G2 motif. The G3 motif stretch occupies residues 144 to 147 (DLPG). GTP contacts are provided by residues 144–148 (DLPGI) and 213–216 (TKPD). Residues 213 to 216 (TKPD) are G4 motif. The G5 motif stretch occupies residues 245-248 (KCRG). The segment at 307–332 (LLEDQINSSHQSASEELQKYGADIPE) is bundle signaling element (BSE). Residues 332–499 (EDDRTRMSFL…HFQMEQIVYC (168 aa)) are middle domain. The stalk stretch occupies residues 333-601 (DDRTRMSFLV…TSKCSWFLEE (269 aa)). The interval 520–522 (KTK) is critical for lipid-binding. The 89-residue stretch at 543–631 (TTEMTQHLKA…ARQKLAKFSD (89 aa)) folds into the GED domain.

Belongs to the TRAFAC class dynamin-like GTPase superfamily. Dynamin/Fzo/YdjA family. Homooligomer. Oligomerizes into multimeric filamentous or ring-like structures by virtue of its stalk domain. Oligomerization is critical for GTPase activity, protein stability, and recognition of viral target structures. Interacts with TRPC1, TRPC3, TRPC4, TRPC5, TRPC6 and TRPC7. Interacts with HSPA5. Interacts with TUBB/TUBB5. Interacts with DDX39A and DDX39B. Post-translationally, ISGylated.

It is found in the cytoplasm. It localises to the nucleus. Its subcellular location is the endoplasmic reticulum membrane. The protein localises to the perinuclear region. Interferon-induced dynamin-like GTPase with antiviral activity against influenza A virus, (IAV), influenza B virus (IBV) and Thogoto virus (THOV). Inhibits FLUAV by interfering with the process of primary transcription, probably by affecting the viral polymerase function. This chain is Interferon-induced GTP-binding protein Mx1 (Mx1), found in Mus musculus (Mouse).